The primary structure comprises 74 residues: Protein kish-B (74 aa).

An N-terminal signal peptide occupies residues 1-22 (MTNVYSFDGILVFGLLFICTCA). Residues 23 to 52 (YLKKVPRLNSWLLSEKKGVWGVFYKAAVIG) are Extracellular-facing. Residues 53–73 (TRLHVVVAASCLCMAFYLIFL) form a helical membrane-spanning segment. Residue K74 is a topological domain, cytoplasmic.

The protein belongs to the KISH family.

The protein resides in the golgi apparatus membrane. Involved in the early part of the secretory pathway. In Danio rerio (Zebrafish), this protein is Protein kish-B (tmem167b).